A 95-amino-acid polypeptide reads, in one-letter code: CRISPR-associated endoribonuclease Cas2 1 (95 aa).

Asp8 is a binding site for Mg(2+).

The protein belongs to the CRISPR-associated endoribonuclease Cas2 protein family. In terms of assembly, homodimer, forms a heterotetramer with a Cas1 homodimer. The cofactor is Mg(2+).

Functionally, CRISPR (clustered regularly interspaced short palindromic repeat), is an adaptive immune system that provides protection against mobile genetic elements (viruses, transposable elements and conjugative plasmids). CRISPR clusters contain sequences complementary to antecedent mobile elements and target invading nucleic acids. CRISPR clusters are transcribed and processed into CRISPR RNA (crRNA). Functions as a ssRNA-specific endoribonuclease. Involved in the integration of spacer DNA into the CRISPR cassette. This is CRISPR-associated endoribonuclease Cas2 1 from Pyrobaculum aerophilum (strain ATCC 51768 / DSM 7523 / JCM 9630 / CIP 104966 / NBRC 100827 / IM2).